The chain runs to 214 residues: Cytochrome b (214 aa).

4 helical membrane passes run 31 to 51, 75 to 96, 111 to 131, and 176 to 196; these read FGSM…FLAI, WIMQ…YIHI, WLSG…GYVL, and FFAL…IHIL. Heme b-binding residues include His-81 and His-95. Heme b contacts are provided by His-180 and His-194. Position 199 (His-199) interacts with a ubiquinone.

The protein belongs to the cytochrome b family. The cytochrome bc1 complex contains 3 respiratory subunits (MT-CYB, CYC1 and UQCRFS1), 2 core proteins (UQCRC1 and UQCRC2) and probably 6 low-molecular weight proteins. It depends on heme b as a cofactor.

It localises to the mitochondrion inner membrane. In terms of biological role, component of the ubiquinol-cytochrome c reductase complex (complex III or cytochrome b-c1 complex) that is part of the mitochondrial respiratory chain. The b-c1 complex mediates electron transfer from ubiquinol to cytochrome c. Contributes to the generation of a proton gradient across the mitochondrial membrane that is then used for ATP synthesis. The polypeptide is Cytochrome b (MT-CYB) (Bothrops atrox (Barba amarilla)).